Here is a 295-residue protein sequence, read N- to C-terminus: Acetylglutamate kinase (295 aa).

Substrate-binding positions include 66 to 67, arginine 88, and asparagine 193; that span reads GG.

The protein belongs to the acetylglutamate kinase family. ArgB subfamily.

It is found in the cytoplasm. The catalysed reaction is N-acetyl-L-glutamate + ATP = N-acetyl-L-glutamyl 5-phosphate + ADP. Its pathway is amino-acid biosynthesis; L-arginine biosynthesis; N(2)-acetyl-L-ornithine from L-glutamate: step 2/4. Functionally, catalyzes the ATP-dependent phosphorylation of N-acetyl-L-glutamate. This chain is Acetylglutamate kinase, found in Sinorhizobium fredii (strain NBRC 101917 / NGR234).